The sequence spans 189 residues: Probable nicotinate-nucleotide adenylyltransferase (189 aa).

The protein belongs to the NadD family.

It catalyses the reaction nicotinate beta-D-ribonucleotide + ATP + H(+) = deamido-NAD(+) + diphosphate. It functions in the pathway cofactor biosynthesis; NAD(+) biosynthesis; deamido-NAD(+) from nicotinate D-ribonucleotide: step 1/1. Its function is as follows. Catalyzes the reversible adenylation of nicotinate mononucleotide (NaMN) to nicotinic acid adenine dinucleotide (NaAD). This is Probable nicotinate-nucleotide adenylyltransferase from Bacillus cereus (strain ATCC 10987 / NRS 248).